Here is a 265-residue protein sequence, read N- to C-terminus: Sulfur carrier protein FdhD (265 aa).

The Cysteine persulfide intermediate role is filled by cysteine 107.

This sequence belongs to the FdhD family.

The protein resides in the cytoplasm. Functionally, required for formate dehydrogenase (FDH) activity. Acts as a sulfur carrier protein that transfers sulfur from IscS to the molybdenum cofactor prior to its insertion into FDH. In Staphylococcus aureus (strain MRSA252), this protein is Sulfur carrier protein FdhD.